The sequence spans 241 residues: Pyridoxine 5'-phosphate synthase (241 aa).

Asparagine 7 is a binding site for 3-amino-2-oxopropyl phosphate. Residue 9–10 coordinates 1-deoxy-D-xylulose 5-phosphate; sequence DH. Arginine 18 provides a ligand contact to 3-amino-2-oxopropyl phosphate. The Proton acceptor role is filled by histidine 43. Arginine 45 and histidine 50 together coordinate 1-deoxy-D-xylulose 5-phosphate. Residue glutamate 70 is the Proton acceptor of the active site. Threonine 100 contacts 1-deoxy-D-xylulose 5-phosphate. The active-site Proton donor is histidine 191. 3-amino-2-oxopropyl phosphate is bound by residues glycine 192 and 213–214; that span reads GH.

The protein belongs to the PNP synthase family. As to quaternary structure, homooctamer; tetramer of dimers.

Its subcellular location is the cytoplasm. It catalyses the reaction 3-amino-2-oxopropyl phosphate + 1-deoxy-D-xylulose 5-phosphate = pyridoxine 5'-phosphate + phosphate + 2 H2O + H(+). It functions in the pathway cofactor biosynthesis; pyridoxine 5'-phosphate biosynthesis; pyridoxine 5'-phosphate from D-erythrose 4-phosphate: step 5/5. Its function is as follows. Catalyzes the complicated ring closure reaction between the two acyclic compounds 1-deoxy-D-xylulose-5-phosphate (DXP) and 3-amino-2-oxopropyl phosphate (1-amino-acetone-3-phosphate or AAP) to form pyridoxine 5'-phosphate (PNP) and inorganic phosphate. In Nostoc punctiforme (strain ATCC 29133 / PCC 73102), this protein is Pyridoxine 5'-phosphate synthase.